The following is a 603-amino-acid chain: Elongation factor 4 (603 aa).

Residues 7-191 (DNIRNFSIVA…AIVTRLPPPK (185 aa)) enclose the tr-type G domain. GTP contacts are provided by residues 19–24 (DHGKST) and 138–141 (NKVD).

This sequence belongs to the TRAFAC class translation factor GTPase superfamily. Classic translation factor GTPase family. LepA subfamily.

The protein localises to the cell inner membrane. It carries out the reaction GTP + H2O = GDP + phosphate + H(+). In terms of biological role, required for accurate and efficient protein synthesis under certain stress conditions. May act as a fidelity factor of the translation reaction, by catalyzing a one-codon backward translocation of tRNAs on improperly translocated ribosomes. Back-translocation proceeds from a post-translocation (POST) complex to a pre-translocation (PRE) complex, thus giving elongation factor G a second chance to translocate the tRNAs correctly. Binds to ribosomes in a GTP-dependent manner. This is Elongation factor 4 from Rhodopseudomonas palustris (strain BisA53).